The sequence spans 279 residues: MSPERPPRTDIPRNLSFIAALTERAYYRSQRPSLEEESEEEPGEGGTRPGARSRAHVPGRGRRARSAPAGGGGARTARSRSPDTRKRVRFADALGLELAVVRRFRPGEPPRVPRHVQVQLQRDALRHFAPCPPRARGLQEARVALEPALEPGFAARLQAQRICLERADAGPLGVAGSARVLDLAYEKRVSVRWSADGWRSLRESPASYAGPAPSPPRADRFAFRLPAPPVGGTLLFALRYRVTGREFWDNNGGRDYALLGPEHPAGAGAAEPQGWIHFI.

Residues Ser16 and Ser33 each carry the phosphoserine modification. Residues 28–87 are disordered; it reads RSQRPSLEEESEEEPGEGGTRPGARSRAHVPGRGRRARSAPAGGGGARTARSRSPDTRKR. Residues 51–65 are compositionally biased toward basic residues; it reads ARSRAHVPGRGRRAR. Ser66 carries the phosphoserine modification. The PP1-binding motif signature appears at 87 to 90; sequence RVRF. One can recognise a CBM21 domain in the interval 154-259; it reads AARLQAQRIC…NNGGRDYALL (106 aa). The interval 176-198 is glycogen-binding motif; it reads GSARVLDLAYEKRVSVRWSADGW. A substrate-binding motif region spans residues 248 to 256; sequence WDNNGGRDY.

Its function is as follows. Acts as a glycogen-targeting subunit for PP1. PP1 is involved in glycogen metabolism and contributes to the activation of glycogen synthase leading to an increase in glycogen synthesis. The sequence is that of Protein phosphatase 1 regulatory subunit 3E (Ppp1r3e) from Mus musculus (Mouse).